The chain runs to 159 residues: ATP synthase subunit b (159 aa).

Residues 2-22 form a helical membrane-spanning segment; the sequence is EFNLVTIGFTIVNFIILMLIL.

This sequence belongs to the ATPase B chain family. F-type ATPases have 2 components, F(1) - the catalytic core - and F(0) - the membrane proton channel. F(1) has five subunits: alpha(3), beta(3), gamma(1), delta(1), epsilon(1). F(0) has three main subunits: a(1), b(2) and c(10-14). The alpha and beta chains form an alternating ring which encloses part of the gamma chain. F(1) is attached to F(0) by a central stalk formed by the gamma and epsilon chains, while a peripheral stalk is formed by the delta and b chains.

It localises to the cell membrane. F(1)F(0) ATP synthase produces ATP from ADP in the presence of a proton or sodium gradient. F-type ATPases consist of two structural domains, F(1) containing the extramembraneous catalytic core and F(0) containing the membrane proton channel, linked together by a central stalk and a peripheral stalk. During catalysis, ATP synthesis in the catalytic domain of F(1) is coupled via a rotary mechanism of the central stalk subunits to proton translocation. Functionally, component of the F(0) channel, it forms part of the peripheral stalk, linking F(1) to F(0). This is ATP synthase subunit b from Clostridium acetobutylicum (strain ATCC 824 / DSM 792 / JCM 1419 / IAM 19013 / LMG 5710 / NBRC 13948 / NRRL B-527 / VKM B-1787 / 2291 / W).